Consider the following 137-residue polypeptide: Lysozyme (137 aa).

A signal peptide spans 1–20 (MSAVLVLALVLLSLTCVTDA). An I-type lysozyme domain is found at 21–134 (ISDACLTCIC…WNAVKNQGCS (114 aa)). 6 disulfides stabilise this stretch: cysteine 25–cysteine 102, cysteine 30–cysteine 37, cysteine 42–cysteine 51, cysteine 64–cysteine 84, cysteine 74–cysteine 80, and cysteine 98–cysteine 116. Residue glutamate 33 is the Proton donor of the active site. The active-site Nucleophile is aspartate 45. 57–63 (KKSYWID) serves as a coordination point for substrate. Substrate-binding positions include tyrosine 88 and 109 to 111 (HNG).

It belongs to the glycosyl hydrolase 22 family. Type-I lysozyme subfamily.

The protein resides in the secreted. It catalyses the reaction Hydrolysis of (1-&gt;4)-beta-linkages between N-acetylmuramic acid and N-acetyl-D-glucosamine residues in a peptidoglycan and between N-acetyl-D-glucosamine residues in chitodextrins.. Functionally, has bacteriolytic activity. May play a role in digestion and in the host defense mechanisms against invading microbes. This chain is Lysozyme (lysoz), found in Ostrea edulis (Native oyster).